A 393-amino-acid polypeptide reads, in one-letter code: NAD(P)H-quinone oxidoreductase subunit H, chloroplastic (393 aa).

Belongs to the complex I 49 kDa subunit family. NDH is composed of at least 16 different subunits, 5 of which are encoded in the nucleus.

The protein localises to the plastid. It localises to the chloroplast thylakoid membrane. It carries out the reaction a plastoquinone + NADH + (n+1) H(+)(in) = a plastoquinol + NAD(+) + n H(+)(out). The enzyme catalyses a plastoquinone + NADPH + (n+1) H(+)(in) = a plastoquinol + NADP(+) + n H(+)(out). NDH shuttles electrons from NAD(P)H:plastoquinone, via FMN and iron-sulfur (Fe-S) centers, to quinones in the photosynthetic chain and possibly in a chloroplast respiratory chain. The immediate electron acceptor for the enzyme in this species is believed to be plastoquinone. Couples the redox reaction to proton translocation, and thus conserves the redox energy in a proton gradient. In Ceratophyllum demersum (Rigid hornwort), this protein is NAD(P)H-quinone oxidoreductase subunit H, chloroplastic.